The primary structure comprises 359 residues: Squamosa promoter-binding-like protein 13A (359 aa).

Positions 75–94 (AKPEGSRSSSSKRTRGNGVG) are disordered. The SBP-type zinc-finger motif lies at 98 to 175 (MPICLVDGCD…DGHNRRRRKP (78 aa)). Residues C101, C106, C123, H126, C142, C145, H149, and C161 each coordinate Zn(2+). Residues 158 to 174 (KRSCRKRLDGHNRRRRK) carry the Bipartite nuclear localization signal motif.

Zn(2+) serves as cofactor.

It localises to the nucleus. Its function is as follows. Trans-acting factor that binds specifically to the consensus nucleotide sequence 5'-TNCGTACAA-3'. This is Squamosa promoter-binding-like protein 13A (SPL13A) from Arabidopsis thaliana (Mouse-ear cress).